A 214-amino-acid chain; its full sequence is MATRGAVAAAASTIWKHRRNPSLRSLSRHFNPNFNHRIIPTGFKYQVRAIQGTSTDPVITPLKNREEPKPQNWKIKMLYDGDCPLCMREVNMLMERNEKHGTIKFVDISSNDYSPEDNQGLDYKTVMGQIHAIQSDGNVVKGVEAFRRLYEEVGLGWVYTITKFEPIGKLADVVYDVWAKYRLQVTGRPSIEAILEARKKDKVETCGESKNCKI.

The N-terminal 49 residues, 1–49, are a transit peptide targeting the chloroplast; that stretch reads MATRGAVAAAASTIWKHRRNPSLRSLSRHFNPNFNHRIIPTGFKYQVRA.

The protein resides in the plastid. The protein localises to the chloroplast. This is an uncharacterized protein from Arabidopsis thaliana (Mouse-ear cress).